The following is a 1423-amino-acid chain: DNA-directed RNA polymerase, mitochondrial (1423 aa).

The N-terminal 73 residues, 1–73 (MLPRTASATR…RATVGFERHL (73 aa)), are a transit peptide targeting the mitochondrion. The interval 266-303 (NMPDNVDPDTFAQQQQQQQQQQQQQQEQQQQQDTSIDQ) is disordered. Low complexity predominate over residues 278-297 (QQQQQQQQQQQQQQEQQQQQ). Residues aspartate 901 and lysine 970 contribute to the active site. A compositionally biased stretch (basic and acidic residues) spans 1055–1064 (EFERSERSPH). The interval 1055 to 1087 (EFERSERSPHGDGTASGENITLAGNPRKSSAHK) is disordered. Residue aspartate 1180 is part of the active site. Residues 1316–1342 (VRRGREMDEEGEVDGSEEAVEHEDGMH) form a disordered region. A compositionally biased stretch (acidic residues) spans 1322–1336 (MDEEGEVDGSEEAVE).

The protein belongs to the phage and mitochondrial RNA polymerase family.

It is found in the mitochondrion. It carries out the reaction RNA(n) + a ribonucleoside 5'-triphosphate = RNA(n+1) + diphosphate. DNA-dependent RNA polymerase catalyzes the transcription of DNA into RNA using the four ribonucleoside triphosphates as substrates. The polypeptide is DNA-directed RNA polymerase, mitochondrial (cyt-5) (Neurospora crassa (strain ATCC 24698 / 74-OR23-1A / CBS 708.71 / DSM 1257 / FGSC 987)).